The chain runs to 266 residues: N-acetylneuraminate lyase B (266 aa).

Residues threonine 51 and threonine 52 each coordinate aceneuramate. Tyrosine 143 acts as the Proton donor in catalysis. The Schiff-base intermediate with substrate role is filled by lysine 173. Aceneuramate is bound by residues serine 175, glycine 197, aspartate 199, glutamate 200, and serine 216.

This sequence belongs to the DapA family. NanA subfamily. As to quaternary structure, homotetramer.

It localises to the cytoplasm. It catalyses the reaction aceneuramate = aldehydo-N-acetyl-D-mannosamine + pyruvate. It participates in amino-sugar metabolism; N-acetylneuraminate degradation. In terms of biological role, catalyzes the cleavage of N-acetylneuraminic acid (sialic acid) to form pyruvate and N-acetylmannosamine via a Schiff base intermediate. It prevents sialic acids from being recycled and returning to the cell surface. Involved in the N-glycolylneuraminic acid (Neu5Gc) degradation pathway. This Xenopus laevis (African clawed frog) protein is N-acetylneuraminate lyase B (npl-b).